The primary structure comprises 456 residues: Acetylcholine receptor subunit alpha (456 aa).

An N-terminal signal peptide occupies residues 1–20; sequence MNYFILILPILPYLYGPAVC. The Extracellular portion of the chain corresponds to 21–230; sequence SEDETRLVKT…ITYHFLLLRL (210 aa). 2 cysteine pairs are disulfide-bonded: Cys148-Cys162 and Cys212-Cys213. A glycan (N-linked (GlcNAc...) asparagine) is linked at Asn161. A run of 3 helical transmembrane segments spans residues 231-255, 263-281, and 297-316; these read PLYF…VFYL, MTLS…LVIV, and YMLF…VIVI. Residues 317–428 lie on the Cytoplasmic side of the membrane; that stretch reads NTHHRSPSTH…WKFVAMVLDH (112 aa). The helical transmembrane segment at 429–447 threads the bilayer; the sequence is ILLCVFMAVCIIGTLGVFA.

It belongs to the ligand-gated ion channel (TC 1.A.9) family. Acetylcholine receptor (TC 1.A.9.1) subfamily. Alpha-1/CHRNA1 sub-subfamily. One of the alpha chains that assemble within the acetylcholine receptor, a pentamer of two alpha chains, a beta, a delta, and a gamma or epsilon chains.

It is found in the postsynaptic cell membrane. The protein resides in the cell membrane. The catalysed reaction is K(+)(in) = K(+)(out). It carries out the reaction Na(+)(in) = Na(+)(out). Functionally, upon acetylcholine binding, the AChR responds by an extensive change in conformation that affects all subunits and leads to opening of an ion-conducting channel across the plasma membrane. The polypeptide is Acetylcholine receptor subunit alpha (chrna1) (Danio rerio (Zebrafish)).